The sequence spans 486 residues: MDLQIALFSLIPVILVFILLLKPKYKNLPPGPHPWPLIGNLPILFTNTEVPLHITLANMARTHGPIMILWLGTQPTVMASTAEAAMEILKTHDRIFSARHIRMSFRLKHHIKYSLVWSDCTDYWKLLRKIVRTEIFSPKMLQAQSHVREQKVAELIDFLRSKEGQVVKISQFVFGTLLNILGNVVFSKDVFVYGDETDKGGIQNLIREMLMIGAEPNVAEFYPSLEELDLQGLKKKCDERFIRVMKMWEGTVKERKANRNEESKDMLDVLLANDFNDAQINALFLETFGPGSETSSATIEWVIAELIKSPKEMAKVRKELNEVVGTSTIKESDLPQLPYLQACIKEAMRLHPAAPFLLPRRAAETCEVMGYTIPKNSQVLVNAYAIGRDPKSWKDPSTFWPERFLESDVDFHGAHYQFIPFGSGRRTCVGMPLATRTIPLIVGSLVHNYDFGLPGGNRPEDLKMNEMLSLTLAIDPSLCVVPKARA.

Residues 6-21 traverse the membrane as a helical segment; the sequence is ALFSLIPVILVFILLL. C428 is a heme binding site.

It belongs to the cytochrome P450 family. Heme is required as a cofactor.

Its subcellular location is the endoplasmic reticulum membrane. The catalysed reaction is (S)-reticuline + reduced [NADPH--hemoprotein reductase] + O2 = (S)-corytuberine + oxidized [NADPH--hemoprotein reductase] + 2 H2O + 2 H(+). Its activity is regulated as follows. Inhibited by ketoconazole. Cytochrome P450 that catalyzes an intramolecular C-C phenol coupling of (S)-reticuline in magnoflorine biosynthesis. Catalyzes the formation of (S)-corytuberine from (S)-reticuline, and also, with a lover efficiency, the 4'-O-demethylation of codamine to produce orientaline, and subsequent C-C-phenol coupling of orientaline. Can also use (R,S)-norreticuline, (R,S)-orientaline, (S)-N-methylcoclaurine and (S)-coclaurine as substrates, but not (R,S)-6-O-methyllaudanosoline, (R,S)-6-O-methylnorlaudanosoline, (R,S)-laudanine, (R,S)-norlaudanine, (R,S)-4'-O-methyllaudanosoline, (R,S)-pseudocodamine, (R,S)-norpseudocodamine, (R,S)-laudanosine, (R,S)-norlaudanosine, (R,S)-laudanosoline or (R,S)-norlaudanosoline. The chain is Corytuberine synthase from Coptis japonica (Japanese goldthread).